A 1271-amino-acid polypeptide reads, in one-letter code: SR-related and CTD-associated factor 8 (1271 aa).

Positions 1-139 (MEAVKTFNSE…PLLDMAAGIP (139 aa)) constitute a CID domain. At threonine 6 the chain carries Phosphothreonine. Lysine 18 participates in a covalent cross-link: Glycyl lysine isopeptide (Lys-Gly) (interchain with G-Cter in SUMO1). The segment covering 270–283 (GEDSEHSEEPKKEI) has biased composition (basic and acidic residues). 3 disordered regions span residues 270–289 (GEDSEHSEEPKKEIPASQLS), 322–354 (QQQPQKATPQDSQEGTFGSEHSASPSQGSSQQH), and 384–468 (EEVF…PPIR). Serine 273 bears the Phosphoserine mark. The span at 327 to 354 (KATPQDSQEGTFGSEHSASPSQGSSQQH) shows a compositional bias: polar residues. A compositionally biased stretch (basic residues) spans 394 to 443 (VAVRSRSRTHSRSRSRSPRKRRSRSRSGSRKRKHRKRSRSRSRERKRKSS). Residues 447 to 461 (SSERRAREREKERQK) are compositionally biased toward basic and acidic residues. Positions 477 to 551 (TTLWVGQVDK…KVIKIAWALN (75 aa)) constitute an RRM domain. Position 615 is a phosphothreonine (threonine 615). A phosphoserine mark is found at serine 617 and serine 779. Positions 899–918 (TQPPAGPQNLPPLSIPNQRM) are disordered. Positions 902 to 912 (PAGPQNLPPLS) are enriched in pro residues. Arginine 917, arginine 927, and arginine 938 each carry asymmetric dimethylarginine. 2 stretches are compositionally biased toward pro residues: residues 945–956 (GIPPQRGIPPPS) and 963–972 (HPPPRGPFPP). Positions 945–1064 (GIPPQRGIPP…DGRDHFGRPP (120 aa)) are disordered. Composition is skewed to basic and acidic residues over residues 1011–1027 (EGDRDYRFPPIETRESI) and 1034–1064 (DVRDVVGRPIDPREGPGRPPLDGRDHFGRPP). Residue arginine 1073 is modified to Asymmetric dimethylarginine. Residues 1198-1271 (YFEGATSQRK…VVESTETEGT (74 aa)) are disordered. The span at 1255–1271 (ADIESEPVVESTETEGT) shows a compositional bias: acidic residues.

In terms of assembly, interacts with POLR2A; via C-terminal heptapeptide repeat domain (CTD) phosphorylated at 'Ser-2' and 'Ser-5'. Identified in a complex with CDC5L and other spliceosomal proteins.

It localises to the nucleus. It is found in the nucleus matrix. Anti-terminator protein required to prevent early mRNA termination during transcription. Together with SCAF4, acts by suppressing the use of early, alternative poly(A) sites, thereby preventing the accumulation of non-functional truncated proteins. Mechanistically, associates with the phosphorylated C-terminal heptapeptide repeat domain (CTD) of the largest RNA polymerase II subunit (POLR2A), and subsequently binds nascent RNA upstream of early polyadenylation sites to prevent premature mRNA transcript cleavage and polyadenylation. Independently of SCAF4, also acts as a positive regulator of transcript elongation. The sequence is that of SR-related and CTD-associated factor 8 from Homo sapiens (Human).